We begin with the raw amino-acid sequence, 206 residues long: Recombination protein RecR (206 aa).

The segment at 60-75 (CAMCNTFCEGGLCDIC) adopts a C4-type zinc-finger fold. Residues 83 to 178 (RRLMVVHMPA…KVSRLSQGIP (96 aa)) form the Toprim domain.

The protein belongs to the RecR family.

In terms of biological role, may play a role in DNA repair. It seems to be involved in an RecBC-independent recombinational process of DNA repair. It may act with RecF and RecO. In Neisseria meningitidis serogroup B (strain ATCC BAA-335 / MC58), this protein is Recombination protein RecR.